The following is a 284-amino-acid chain: RNase adapter protein RapZ (284 aa).

8 to 15 (GRSGSGKS) is a binding site for ATP. 56–59 (DVRN) serves as a coordination point for GTP. Positions 266–284 (RSRGKNVQSRHRTLEKRKT) are RNA-binding.

It belongs to the RapZ-like family. RapZ subfamily. In terms of assembly, homotrimer.

Its function is as follows. Modulates the synthesis of GlmS, by affecting the processing and stability of the regulatory small RNA GlmZ. When glucosamine-6-phosphate (GlcN6P) concentrations are high in the cell, RapZ binds GlmZ and targets it to cleavage by RNase E. Consequently, GlmZ is inactivated and unable to activate GlmS synthesis. Under low GlcN6P concentrations, RapZ is sequestered and inactivated by an other regulatory small RNA, GlmY, preventing GlmZ degradation and leading to synthesis of GlmS. This is RNase adapter protein RapZ from Citrobacter koseri (strain ATCC BAA-895 / CDC 4225-83 / SGSC4696).